A 412-amino-acid polypeptide reads, in one-letter code: CCA-adding enzyme (412 aa).

ATP-binding residues include Ser41 and Lys44. Positions 41 and 44 each coordinate CTP. Asp53, Asp55, and Asp106 together coordinate Mg(2+). The ATP site is built by His129, Lys149, and Tyr158. Residues His129, Lys149, and Tyr158 each contribute to the CTP site.

It belongs to the tRNA nucleotidyltransferase/poly(A) polymerase family. Archaeal CCA-adding enzyme subfamily. As to quaternary structure, homodimer. Mg(2+) serves as cofactor.

It catalyses the reaction a tRNA precursor + 2 CTP + ATP = a tRNA with a 3' CCA end + 3 diphosphate. The enzyme catalyses a tRNA with a 3' CCA end + 2 CTP + ATP = a tRNA with a 3' CCACCA end + 3 diphosphate. Functionally, catalyzes the addition and repair of the essential 3'-terminal CCA sequence in tRNAs without using a nucleic acid template. Adds these three nucleotides in the order of C, C, and A to the tRNA nucleotide-73, using CTP and ATP as substrates and producing inorganic pyrophosphate. tRNA 3'-terminal CCA addition is required both for tRNA processing and repair. Also involved in tRNA surveillance by mediating tandem CCA addition to generate a CCACCA at the 3' terminus of unstable tRNAs. While stable tRNAs receive only 3'-terminal CCA, unstable tRNAs are marked with CCACCA and rapidly degraded. This Saccharolobus islandicus (strain Y.G.57.14 / Yellowstone #1) (Sulfolobus islandicus) protein is CCA-adding enzyme.